A 190-amino-acid polypeptide reads, in one-letter code: Holliday junction branch migration complex subunit RuvA (190 aa).

Residues 1-64 form a domain I region; it reads MIGRITGTLI…EDAHILYGFA (64 aa). The interval 65-137 is domain II; sequence TAAERGAFRE…MRGKLGADIG (73 aa). A flexible linker region spans residues 137–141; the sequence is GATAH. A domain III region spans residues 142–190; sequence AVPDSQTDILNALLALGYSDKESQAALKKLPEGTGVSEGIRLALKALVR.

The protein belongs to the RuvA family. As to quaternary structure, homotetramer. Forms an RuvA(8)-RuvB(12)-Holliday junction (HJ) complex. HJ DNA is sandwiched between 2 RuvA tetramers; dsDNA enters through RuvA and exits via RuvB. An RuvB hexamer assembles on each DNA strand where it exits the tetramer. Each RuvB hexamer is contacted by two RuvA subunits (via domain III) on 2 adjacent RuvB subunits; this complex drives branch migration. In the full resolvosome a probable DNA-RuvA(4)-RuvB(12)-RuvC(2) complex forms which resolves the HJ.

Its subcellular location is the cytoplasm. In terms of biological role, the RuvA-RuvB-RuvC complex processes Holliday junction (HJ) DNA during genetic recombination and DNA repair, while the RuvA-RuvB complex plays an important role in the rescue of blocked DNA replication forks via replication fork reversal (RFR). RuvA specifically binds to HJ cruciform DNA, conferring on it an open structure. The RuvB hexamer acts as an ATP-dependent pump, pulling dsDNA into and through the RuvAB complex. HJ branch migration allows RuvC to scan DNA until it finds its consensus sequence, where it cleaves and resolves the cruciform DNA. The chain is Holliday junction branch migration complex subunit RuvA from Bordetella petrii (strain ATCC BAA-461 / DSM 12804 / CCUG 43448).